The following is a 377-amino-acid chain: N-acetyldiaminopimelate deacetylase (377 aa).

Asp-70 is a catalytic residue. Glu-129 acts as the Proton acceptor in catalysis.

Belongs to the peptidase M20A family. N-acetyldiaminopimelate deacetylase subfamily.

It carries out the reaction N-acetyl-(2S,6S)-2,6-diaminopimelate + H2O = (2S,6S)-2,6-diaminopimelate + acetate. It participates in amino-acid biosynthesis; L-lysine biosynthesis via DAP pathway; LL-2,6-diaminopimelate from (S)-tetrahydrodipicolinate (acetylase route): step 3/3. Catalyzes the conversion of N-acetyl-diaminopimelate to diaminopimelate and acetate. The protein is N-acetyldiaminopimelate deacetylase of Streptococcus thermophilus (strain ATCC BAA-491 / LMD-9).